Consider the following 346-residue polypeptide: GPALPP motifs-containing protein 1 (346 aa).

Disordered stretches follow at residues 1 to 283 and 289 to 308; these read MARD…ESLM and KLKS…IPFD. Alanine 2 carries the N-acetylalanine modification. A GPALPP motif 1 motif is present at residues 7 to 12; that stretch reads GPALPP. The residue at position 28 (serine 28) is a Phosphoserine. Residues 32 to 37 carry the GPALPP motif 2 motif; it reads GPALPP. Positions 60–69 are enriched in acidic residues; sequence GNQESEEEDT. The GPALPP motif 3 motif lies at 91–96; the sequence is GPALPP. Serine 104 is modified (phosphoserine). Positions 106 to 115 are enriched in pro residues; the sequence is PRPIIGPALP. The GPALPP motif 4 signature appears at 111–116; it reads GPALPP. Basic and acidic residues predominate over residues 123-132; that stretch reads QKNDKGREDP. Phosphoserine occurs at positions 136, 141, and 146. Residues 142-152 are compositionally biased toward acidic residues; it reads EEAESGEDEDI. Composition is skewed to basic and acidic residues over residues 169–193 and 233–267; these read EFEK…KPIT and PADR…KRLA. A Glycyl lysine isopeptide (Lys-Gly) (interchain with G-Cter in SUMO2) cross-link involves residue lysine 277. Positions 293–308 are enriched in basic and acidic residues; it reads KAAEDKNKHQERIPFD. Lysine 314 participates in a covalent cross-link: Glycyl lysine isopeptide (Lys-Gly) (interchain with G-Cter in SUMO2).

The protein is GPALPP motifs-containing protein 1 (Gpalpp1) of Mus musculus (Mouse).